The sequence spans 295 residues: Putative sugar uptake protein YxfA (295 aa).

A run of 10 helical transmembrane segments spans residues 4–26 (VLLALVPMFAWGSIGFVANKFGG), 33–50 (LGMTLGAFVFALIVFLFR), 54–72 (LTWQIFLIGFIGGLLWAIG), 85–107 (VSVASPLSSGSQLVIGGLIGVFA), 117–135 (FILGFIAMAVLVVGFYFSA), 156–178 (ALTYSTLGYVIYVILFNNLAVLW), 188–206 (IILPMSVGMIFGALVMGRF), 213–235 (YVYQNMIVGAMWGVGNIFMLMAA), 241–263 (AIAFSFSQLGVIVSTIGGILFLG), and 270–291 (ELVYVGIGIVLFVTGAILLAIV).

The protein belongs to the GRP transporter (TC 2.A.7.5) family.

Its subcellular location is the cell membrane. The polypeptide is Putative sugar uptake protein YxfA (yxfA) (Lactococcus lactis subsp. lactis (strain IL1403) (Streptococcus lactis)).